A 103-amino-acid polypeptide reads, in one-letter code: Large ribosomal subunit protein P2 (103 aa).

Positions 64 to 103 (LAISSSQKSEPAQPADTAESTQATENKEEEDEDFDIFAAF) are disordered. The span at 90–103 (KEEEDEDFDIFAAF) shows a compositional bias: acidic residues.

The protein belongs to the eukaryotic ribosomal protein P1/P2 family. Component of the large ribosomal subunit.

Its subcellular location is the cytoplasm. Plays an important role in the elongation step of protein synthesis. In Encephalitozoon cuniculi (strain GB-M1) (Microsporidian parasite), this protein is Large ribosomal subunit protein P2 (RPP2A).